The sequence spans 224 residues: Thiamine-phosphate synthase (224 aa).

4-amino-2-methyl-5-(diphosphooxymethyl)pyrimidine is bound by residues 41–45 (QFRDK) and D77. The Mg(2+) site is built by D78 and D97. A 4-amino-2-methyl-5-(diphosphooxymethyl)pyrimidine-binding site is contributed by S116. 143–145 (TNS) contributes to the 2-[(2R,5Z)-2-carboxy-4-methylthiazol-5(2H)-ylidene]ethyl phosphate binding site. K146 serves as a coordination point for 4-amino-2-methyl-5-(diphosphooxymethyl)pyrimidine. 2-[(2R,5Z)-2-carboxy-4-methylthiazol-5(2H)-ylidene]ethyl phosphate is bound by residues G174 and 194 to 195 (IS).

The protein belongs to the thiamine-phosphate synthase family. The cofactor is Mg(2+).

The enzyme catalyses 2-[(2R,5Z)-2-carboxy-4-methylthiazol-5(2H)-ylidene]ethyl phosphate + 4-amino-2-methyl-5-(diphosphooxymethyl)pyrimidine + 2 H(+) = thiamine phosphate + CO2 + diphosphate. It catalyses the reaction 2-(2-carboxy-4-methylthiazol-5-yl)ethyl phosphate + 4-amino-2-methyl-5-(diphosphooxymethyl)pyrimidine + 2 H(+) = thiamine phosphate + CO2 + diphosphate. It carries out the reaction 4-methyl-5-(2-phosphooxyethyl)-thiazole + 4-amino-2-methyl-5-(diphosphooxymethyl)pyrimidine + H(+) = thiamine phosphate + diphosphate. Its pathway is cofactor biosynthesis; thiamine diphosphate biosynthesis; thiamine phosphate from 4-amino-2-methyl-5-diphosphomethylpyrimidine and 4-methyl-5-(2-phosphoethyl)-thiazole: step 1/1. Condenses 4-methyl-5-(beta-hydroxyethyl)thiazole monophosphate (THZ-P) and 2-methyl-4-amino-5-hydroxymethyl pyrimidine pyrophosphate (HMP-PP) to form thiamine monophosphate (TMP). The protein is Thiamine-phosphate synthase of Latilactobacillus sakei subsp. sakei (strain 23K) (Lactobacillus sakei subsp. sakei).